A 379-amino-acid chain; its full sequence is Putative beta-glucosidase 6 (379 aa).

Residues 1–20 (MEKTFALITIFLAFAFSGKC) form the signal peptide. A beta-D-glucoside-binding positions include Q43, H141, and 186-187 (NE). E187 functions as the Proton donor in the catalytic mechanism. A disulfide bridge connects residues C206 and C213. Residue N217 is glycosylated (N-linked (GlcNAc...) asparagine). Y329 lines the a beta-D-glucoside pocket. N362 carries an N-linked (GlcNAc...) asparagine glycan.

Belongs to the glycosyl hydrolase 1 family.

The enzyme catalyses Hydrolysis of terminal, non-reducing beta-D-glucosyl residues with release of beta-D-glucose.. This Arabidopsis thaliana (Mouse-ear cress) protein is Putative beta-glucosidase 6.